A 61-amino-acid chain; its full sequence is Small ribosomal subunit protein uS14 (61 aa).

Cysteine 24, cysteine 27, cysteine 40, and cysteine 43 together coordinate Zn(2+).

This sequence belongs to the universal ribosomal protein uS14 family. Zinc-binding uS14 subfamily. Part of the 30S ribosomal subunit. Contacts proteins S3 and S10. It depends on Zn(2+) as a cofactor.

Binds 16S rRNA, required for the assembly of 30S particles and may also be responsible for determining the conformation of the 16S rRNA at the A site. The polypeptide is Small ribosomal subunit protein uS14 (Anaeromyxobacter dehalogenans (strain 2CP-1 / ATCC BAA-258)).